A 321-amino-acid chain; its full sequence is RNA/RNP complex-1-interacting phosphatase (321 aa).

Residues methionine 1–glycine 11 are compositionally biased toward basic residues. The tract at residues methionine 1 to arginine 27 is disordered. The 148-residue stretch at phenylalanine 60–arginine 207 folds into the Tyrosine-protein phosphatase domain. Cysteine 151 (phosphocysteine intermediate) is an active-site residue. Threonine 152–arginine 157 serves as a coordination point for substrate. The Proton donor/acceptor role is filled by arginine 157. The tract at residues lysine 205–tyrosine 262 is disordered. Basic residues predominate over residues proline 233 to glycine 245. The segment covering glutamine 251–tyrosine 262 has biased composition (polar residues).

Belongs to the protein-tyrosine phosphatase family. Non-receptor class dual specificity subfamily. As to quaternary structure, monomer. May interact with SFRS7 and SFRS9/SRP30C.

The protein resides in the nucleus. The protein localises to the nucleus speckle. Its function is as follows. Possesses RNA 5'-triphosphatase and diphosphatase activities, but displays a poor protein-tyrosine phosphatase activity. In addition, has phosphatase activity with ATP, ADP and O-methylfluorescein phosphate (in vitro). Binds to RNA. May participate in nuclear mRNA metabolism. The protein is RNA/RNP complex-1-interacting phosphatase (Dusp11) of Mus musculus (Mouse).